Reading from the N-terminus, the 420-residue chain is Probable serine hydroxymethyltransferase (420 aa).

(6S)-5,6,7,8-tetrahydrofolate contacts are provided by residues Leu-121 and 125 to 127 (GHL). Lys-230 carries the N6-(pyridoxal phosphate)lysine modification. (6S)-5,6,7,8-tetrahydrofolate contacts are provided by residues Glu-246 and 354–356 (SPF).

Belongs to the SHMT family. As to quaternary structure, homodimer. The cofactor is pyridoxal 5'-phosphate.

It is found in the cytoplasm. It carries out the reaction (6R)-5,10-methylene-5,6,7,8-tetrahydrofolate + glycine + H2O = (6S)-5,6,7,8-tetrahydrofolate + L-serine. The protein operates within one-carbon metabolism; tetrahydrofolate interconversion. In terms of biological role, catalyzes the reversible interconversion of serine and glycine with tetrahydrofolate (THF) serving as the one-carbon carrier. This reaction serves as the major source of one-carbon groups required for the biosynthesis of purines, thymidylate, methionine, and other important biomolecules. This is Probable serine hydroxymethyltransferase from Rickettsia bellii (strain RML369-C).